Consider the following 457-residue polypeptide: Siroheme synthase (457 aa).

Positions 1–204 (MDHLPIFCQL…ADEKAVNATT (204 aa)) are precorrin-2 dehydrogenase /sirohydrochlorin ferrochelatase. Residues 22–23 (DV) and 43–44 (LN) each bind NAD(+). S128 carries the phosphoserine modification. The segment at 216–457 (GEVVLVGAGP…RDKLNWFSNH (242 aa)) is uroporphyrinogen-III C-methyltransferase. Residue P225 participates in S-adenosyl-L-methionine binding. The Proton acceptor role is filled by D248. K270 functions as the Proton donor in the catalytic mechanism. S-adenosyl-L-methionine contacts are provided by residues 301 to 303 (GGD), I306, 331 to 332 (TA), M382, and G411.

The protein in the N-terminal section; belongs to the precorrin-2 dehydrogenase / sirohydrochlorin ferrochelatase family. This sequence in the C-terminal section; belongs to the precorrin methyltransferase family.

It carries out the reaction uroporphyrinogen III + 2 S-adenosyl-L-methionine = precorrin-2 + 2 S-adenosyl-L-homocysteine + H(+). The enzyme catalyses precorrin-2 + NAD(+) = sirohydrochlorin + NADH + 2 H(+). The catalysed reaction is siroheme + 2 H(+) = sirohydrochlorin + Fe(2+). It participates in cofactor biosynthesis; adenosylcobalamin biosynthesis; precorrin-2 from uroporphyrinogen III: step 1/1. It functions in the pathway cofactor biosynthesis; adenosylcobalamin biosynthesis; sirohydrochlorin from precorrin-2: step 1/1. The protein operates within porphyrin-containing compound metabolism; siroheme biosynthesis; precorrin-2 from uroporphyrinogen III: step 1/1. Its pathway is porphyrin-containing compound metabolism; siroheme biosynthesis; siroheme from sirohydrochlorin: step 1/1. It participates in porphyrin-containing compound metabolism; siroheme biosynthesis; sirohydrochlorin from precorrin-2: step 1/1. Its function is as follows. Multifunctional enzyme that catalyzes the SAM-dependent methylations of uroporphyrinogen III at position C-2 and C-7 to form precorrin-2 via precorrin-1. Then it catalyzes the NAD-dependent ring dehydrogenation of precorrin-2 to yield sirohydrochlorin. Finally, it catalyzes the ferrochelation of sirohydrochlorin to yield siroheme. This chain is Siroheme synthase, found in Salmonella paratyphi A (strain ATCC 9150 / SARB42).